The primary structure comprises 355 residues: Biotin synthase (355 aa).

The Radical SAM core domain occupies 51 to 275 (NTVKVNYLVN…VCPDKEIRIA (225 aa)). The [4Fe-4S] cluster site is built by Cys-66, Cys-70, and Cys-73. Cys-110, Cys-143, Cys-203, and Arg-273 together coordinate [2Fe-2S] cluster.

The protein belongs to the radical SAM superfamily. Biotin synthase family. Homodimer. Requires [4Fe-4S] cluster as cofactor. It depends on [2Fe-2S] cluster as a cofactor.

It catalyses the reaction (4R,5S)-dethiobiotin + (sulfur carrier)-SH + 2 reduced [2Fe-2S]-[ferredoxin] + 2 S-adenosyl-L-methionine = (sulfur carrier)-H + biotin + 2 5'-deoxyadenosine + 2 L-methionine + 2 oxidized [2Fe-2S]-[ferredoxin]. The protein operates within cofactor biosynthesis; biotin biosynthesis; biotin from 7,8-diaminononanoate: step 2/2. Catalyzes the conversion of dethiobiotin (DTB) to biotin by the insertion of a sulfur atom into dethiobiotin via a radical-based mechanism. This is Biotin synthase from Saccharopolyspora erythraea (strain ATCC 11635 / DSM 40517 / JCM 4748 / NBRC 13426 / NCIMB 8594 / NRRL 2338).